Consider the following 441-residue polypeptide: 5-hydroxytryptamine receptor 3B (441 aa).

The signal sequence occupies residues 1-21; sequence MLSSVMAPLWACILVAAGILA. Over 22–238 the chain is Extracellular; it reads TDTHHPQDSA…IQFNVVMRRH (217 aa). 5 N-linked (GlcNAc...) asparagine glycosylation sites follow: Asn52, Asn96, Asn138, Asn168, and Asn203. Cys155 and Cys169 are joined by a disulfide. A helical membrane pass occupies residues 239-259; that stretch reads PLVYVVSLLIPSIFLMLVDLG. Topologically, residues 260 to 268 are cytoplasmic; it reads SFYLPPNCR. The helical transmembrane segment at 269–286 threads the bilayer; the sequence is ARIVFKTSVLVGYTVFRV. A glycan (N-linked (GlcNAc...) asparagine) is linked at Asn287. Topologically, residues 287–303 are extracellular; it reads NMSNQVPRSVGSTPLIG. The helical transmembrane segment at 304 to 324 threads the bilayer; sequence HFFTICMAFLVLSLAKSIVLV. The Cytoplasmic portion of the chain corresponds to 325–414; sequence KFLHDEQRGG…WLVLLSRFDR (90 aa). The segment at 381–413 is HA-stretch; determines single-channel conductance in 5-HT3 receptors; that stretch reads VWSQLQSISNYLQTQDQTDQQEAEWLVLLSRFD. Residues 415–435 traverse the membrane as a helical segment; the sequence is LLFQSYLFMLGIYTITLCSLW. The Extracellular portion of the chain corresponds to 436 to 441; it reads ALWGGV.

This sequence belongs to the ligand-gated ion channel (TC 1.A.9) family. 5-hydroxytryptamine receptor (TC 1.A.9.2) subfamily. HTR3B sub-subfamily. Forms homopentameric as well as heteropentameric serotonin-activated cation-selective channel complexes with HTR3A. The homomeric complex is not functional. Heteropentameric complexes display properties which resemble that of neuronal serotonin-activated channels in vivo. N-glycosylation required for membrane localization. In terms of tissue distribution, expressed in the brain cortex, in the caudate nucleus, the hippocampus, the thalamus and the amygdala. Detected in the kidney and testis as well as in monocytes of the spleen, small and large intestine, uterus, prostate, ovary and placenta.

It localises to the postsynaptic cell membrane. It is found in the cell membrane. It carries out the reaction Na(+)(in) = Na(+)(out). The enzyme catalyses K(+)(in) = K(+)(out). The catalysed reaction is Ca(2+)(in) = Ca(2+)(out). Functionally, forms serotonin (5-hydroxytryptamine/5-HT3)-activated cation-selective channel complexes, which when activated cause fast, depolarizing responses in neurons. In Homo sapiens (Human), this protein is 5-hydroxytryptamine receptor 3B.